Consider the following 559-residue polypeptide: Poly [ADP-ribose] polymerase 2 (559 aa).

The tract at residues 1–58 (MAPRRQRSGSGRRVLNEAKKVDNGNKATEDDSPPGKKMRTCQRKGPMAGGKDADRTKD) is disordered. Residues 1–83 (MAPRRQRSGS…VDPECAAKLG (83 aa)) are N-terminal region (NTR). Residues 14–29 (VLNEAKKVDNGNKATE) are compositionally biased toward basic and acidic residues. Short sequence motifs (nuclear localization signal) lie at residues 19–20 (KK) and 33–39 (PPGKKMR). N6-(ADP-ribosyl)lysine; alternate occurs at positions 36 and 37. An N6-acetyllysine; alternate mark is found at Lys-36 and Lys-37. The 98-residue stretch at 84–181 (KAHVYCEGDD…ENFEKVPGKY (98 aa)) folds into the WGR domain. Positions 207 to 324 (ESQLDLRVQE…DIEIALKLVK (118 aa)) constitute a PARP alpha-helical domain. Ser-208 carries the phosphoserine modification. One can recognise a PARP catalytic domain in the interval 332-559 (HPLDQHYRNL…KIQFNFLQLW (228 aa)). Residues 404–406 (HGS), Gly-413, Arg-420, and Ser-446 contribute to the NAD(+) site. The active-site For poly [ADP-ribose] polymerase activity is the Glu-534.

Belongs to the ARTD/PARP family. In terms of assembly, component of a base excision repair (BER) complex, containing at least XRCC1, PARP1, POLB and LRIG3. Homo- and heterodimer with PARP1. Interacts (via the PARP catalytic domain) with HPF1. Interacts with core nucleosomes. Post-translationally, auto poly-ADP-ribosylated on serine residues, leading to dissociation of the PARP2-HPF1 complex from chromatin. Poly-ADP-ribosylated by PARP1. Acetylation reduces DNA binding and enzymatic activity. In terms of processing, proteolytically cleaved by caspase-8 (CASP8) in response to apoptosis, leading to its inactivation. Widely expressed; the highest levels were in testis followed by ovary. Expression is correlated with proliferation, with higher levels occurring during early fetal development and organogenesis and in the highly proliferative cell compartments of adult.

The protein localises to the nucleus. It localises to the chromosome. The catalysed reaction is NAD(+) + (ADP-D-ribosyl)n-acceptor = nicotinamide + (ADP-D-ribosyl)n+1-acceptor + H(+).. It carries out the reaction L-seryl-[protein] + NAD(+) = O-(ADP-D-ribosyl)-L-seryl-[protein] + nicotinamide + H(+). It catalyses the reaction L-aspartyl-[protein] + NAD(+) = 4-O-(ADP-D-ribosyl)-L-aspartyl-[protein] + nicotinamide. The enzyme catalyses L-glutamyl-[protein] + NAD(+) = 5-O-(ADP-D-ribosyl)-L-glutamyl-[protein] + nicotinamide. Its activity is regulated as follows. ADP-ribosyltransferase activity is regulated via an allosteric activation mechanism. In absence of activation signal, PARP2 is autoinhibited by the PARP alpha-helical domain (also named HD region), which prevents effective NAD(+)-binding. Activity is highly stimulated by signals, which unfold the PARP alpha-helical domain, relieving autoinhibition. Poly-ADP-ribosyltransferase activity is tightly regulated and PARP2 is removed from damaged chromatin following initial poly-ADP-ribosylation of chromatin to avoid prolonged residence (trapping) that has cytotoxic consequences. CHD1L promotes PARP2 removal from chromatin. Its function is as follows. Poly-ADP-ribosyltransferase that mediates poly-ADP-ribosylation of proteins and plays a key role in DNA repair. Mediates glutamate, aspartate or serine ADP-ribosylation of proteins: the ADP-D-ribosyl group of NAD(+) is transferred to the acceptor carboxyl group of target residues and further ADP-ribosyl groups are transferred to the 2'-position of the terminal adenosine moiety, building up a polymer with an average chain length of 20-30 units. Serine ADP-ribosylation of proteins constitutes the primary form of ADP-ribosylation of proteins in response to DNA damage. Mediates glutamate and aspartate ADP-ribosylation of target proteins in absence of HPF1. Following interaction with HPF1, catalyzes serine ADP-ribosylation of target proteins; HPF1 conferring serine specificity by completing the PARP2 active site. PARP2 initiates the repair of double-strand DNA breaks: recognizes and binds DNA breaks within chromatin and recruits HPF1, licensing serine ADP-ribosylation of target proteins, such as histones, thereby promoting decompaction of chromatin and the recruitment of repair factors leading to the reparation of DNA strand breaks. HPF1 initiates serine ADP-ribosylation but restricts the polymerase activity of PARP2 in order to limit the length of poly-ADP-ribose chains. Specifically mediates formation of branched poly-ADP-ribosylation. Branched poly-ADP-ribose chains are specifically recognized by some factors, such as APLF. In addition to proteins, also able to ADP-ribosylate DNA: preferentially acts on 5'-terminal phosphates at DNA strand breaks termini in nicked duplex. This is Poly [ADP-ribose] polymerase 2 (Parp2) from Mus musculus (Mouse).